Here is a 321-residue protein sequence, read N- to C-terminus: UDP-N-acetylenolpyruvoylglucosamine reductase (321 aa).

The FAD-binding PCMH-type domain occupies 39–205; the sequence is RTGGLAELFY…TAALLEGEPG (167 aa). Residue Arg185 is part of the active site. Ser234 functions as the Proton donor in the catalytic mechanism. Glu304 is a catalytic residue.

This sequence belongs to the MurB family. Requires FAD as cofactor.

The protein resides in the cytoplasm. The catalysed reaction is UDP-N-acetyl-alpha-D-muramate + NADP(+) = UDP-N-acetyl-3-O-(1-carboxyvinyl)-alpha-D-glucosamine + NADPH + H(+). The protein operates within cell wall biogenesis; peptidoglycan biosynthesis. Functionally, cell wall formation. The sequence is that of UDP-N-acetylenolpyruvoylglucosamine reductase from Bartonella quintana (strain Toulouse) (Rochalimaea quintana).